The chain runs to 332 residues: Ribosomal RNA small subunit methyltransferase H (332 aa).

Residues Gly-39–Tyr-41, Asp-56, Phe-83, Asp-100, and Gln-107 contribute to the S-adenosyl-L-methionine site.

This sequence belongs to the methyltransferase superfamily. RsmH family.

The protein resides in the cytoplasm. The enzyme catalyses cytidine(1402) in 16S rRNA + S-adenosyl-L-methionine = N(4)-methylcytidine(1402) in 16S rRNA + S-adenosyl-L-homocysteine + H(+). In terms of biological role, specifically methylates the N4 position of cytidine in position 1402 (C1402) of 16S rRNA. In Bartonella grahamii (strain as4aup), this protein is Ribosomal RNA small subunit methyltransferase H.